The following is a 366-amino-acid chain: tRNA(Met) cytidine acetate ligase (366 aa).

ATP is bound by residues 7–20 (IAEF…HQYL), G96, N152, and R175.

This sequence belongs to the TmcAL family.

It is found in the cytoplasm. It carries out the reaction cytidine(34) in elongator tRNA(Met) + acetate + ATP = N(4)-acetylcytidine(34) in elongator tRNA(Met) + AMP + diphosphate. Its function is as follows. Catalyzes the formation of N(4)-acetylcytidine (ac(4)C) at the wobble position of elongator tRNA(Met), using acetate and ATP as substrates. First activates an acetate ion to form acetyladenylate (Ac-AMP) and then transfers the acetyl group to tRNA to form ac(4)C34. The protein is tRNA(Met) cytidine acetate ligase of Streptococcus equi subsp. zooepidemicus (strain H70).